The chain runs to 393 residues: Probable acetyl-CoA acyltransferase (393 aa).

Cysteine 88 serves as the catalytic Acyl-thioester intermediate. Active-site proton acceptor residues include histidine 349 and cysteine 378.

The protein belongs to the thiolase-like superfamily. Thiolase family.

The protein resides in the cytoplasm. The catalysed reaction is 2 acetyl-CoA = acetoacetyl-CoA + CoA. This chain is Probable acetyl-CoA acyltransferase, found in Staphylococcus aureus (strain MRSA252).